The sequence spans 215 residues: Cytochrome b6 (215 aa).

The chain crosses the membrane as a helical span at residues 32-52; that stretch reads IFYCLGGITLTCFLVQVATGF. Residue Cys-35 coordinates heme c. Heme b is bound by residues His-86 and His-100. 3 helical membrane passes run 90–110, 116–136, and 186–206; these read ASMM…TGGF, LTWV…VTGY, and LHTF…FPMI. The heme b site is built by His-187 and His-202.

This sequence belongs to the cytochrome b family. PetB subfamily. In terms of assembly, the 4 large subunits of the cytochrome b6-f complex are cytochrome b6, subunit IV (17 kDa polypeptide, PetD), cytochrome f and the Rieske protein, while the 4 small subunits are PetG, PetL, PetM and PetN. The complex functions as a dimer. The cofactor is heme b. It depends on heme c as a cofactor.

It is found in the plastid. The protein localises to the chloroplast thylakoid membrane. Its function is as follows. Component of the cytochrome b6-f complex, which mediates electron transfer between photosystem II (PSII) and photosystem I (PSI), cyclic electron flow around PSI, and state transitions. The polypeptide is Cytochrome b6 (Agrostis stolonifera (Creeping bentgrass)).